We begin with the raw amino-acid sequence, 75 residues long: Porwaprin-b (75 aa).

The first 24 residues, 1–24 (MSSGGLLLLLGLLTLWAELTPVSG), serve as a signal peptide directing secretion. One can recognise a WAP domain in the interval 27–72 (RPVKPGLCPPRPQKPPCVKECKNDWSCRGEQKCCHYGCIYECRDPI). 4 disulfide bridges follow: cysteine 34–cysteine 60, cysteine 43–cysteine 64, cysteine 47–cysteine 59, and cysteine 53–cysteine 68.

It belongs to the venom waprin family. Expressed by the venom gland.

The protein localises to the secreted. Functionally, damages membranes of susceptible bacteria. Has no hemolytic activity. Not toxic to mice. Does not inhibit the proteinases elastase and cathepsin G. The sequence is that of Porwaprin-b from Pseudechis porphyriacus (Red-bellied black snake).